Reading from the N-terminus, the 254-residue chain is Ribosomal RNA large subunit methyltransferase E (254 aa).

The interval Met-1–Gln-28 is disordered. A compositionally biased stretch (basic residues) spans Leu-13 to Gly-22. Positions 80, 82, 103, 119, and 143 each coordinate S-adenosyl-L-methionine. Lys-183 functions as the Proton acceptor in the catalytic mechanism. Residues Asp-231 to Gln-254 form a disordered region.

The protein belongs to the class I-like SAM-binding methyltransferase superfamily. RNA methyltransferase RlmE family.

The protein resides in the cytoplasm. The catalysed reaction is uridine(2552) in 23S rRNA + S-adenosyl-L-methionine = 2'-O-methyluridine(2552) in 23S rRNA + S-adenosyl-L-homocysteine + H(+). Its function is as follows. Specifically methylates the uridine in position 2552 of 23S rRNA at the 2'-O position of the ribose in the fully assembled 50S ribosomal subunit. This is Ribosomal RNA large subunit methyltransferase E from Xanthobacter autotrophicus (strain ATCC BAA-1158 / Py2).